A 483-amino-acid polypeptide reads, in one-letter code: Cobyric acid synthase (483 aa).

Positions 248-434 (ALRVVVPVLP…LHGLFEQPSA (187 aa)) constitute a GATase cobBQ-type domain. C329 (nucleophile) is an active-site residue. The active site involves H426.

This sequence belongs to the CobB/CobQ family. CobQ subfamily.

It participates in cofactor biosynthesis; adenosylcobalamin biosynthesis. Its function is as follows. Catalyzes amidations at positions B, D, E, and G on adenosylcobyrinic A,C-diamide. NH(2) groups are provided by glutamine, and one molecule of ATP is hydrogenolyzed for each amidation. The sequence is that of Cobyric acid synthase from Ectopseudomonas mendocina (strain ymp) (Pseudomonas mendocina).